Consider the following 88-residue polypeptide: Large ribosomal subunit protein bL31B (88 aa).

This sequence belongs to the bacterial ribosomal protein bL31 family. Type B subfamily. In terms of assembly, part of the 50S ribosomal subunit.

The chain is Large ribosomal subunit protein bL31B from Corynebacterium efficiens (strain DSM 44549 / YS-314 / AJ 12310 / JCM 11189 / NBRC 100395).